A 790-amino-acid chain; its full sequence is Nuclear cap-binding protein subunit 1 (790 aa).

Residues 1 to 26 (MSRRRHSYENDGGQPHKRRKTSDANE) form a disordered region. The short motif at 3–20 (RRRHSYENDGGQPHKRRK) is the Nuclear localization signal element. S7 is subject to Phosphoserine. T21 carries the post-translational modification Phosphothreonine. Residues S22 and S201 each carry the phosphoserine modification. In terms of domain architecture, MIF4G spans 28–240 (EDHLESLICK…CLWAQIQKLK (213 aa)). K204 is subject to N6-acetyllysine. Positions 643–713 (STIRKMNKHV…SEQKNLFLVI (71 aa)) form a coiled coil. A Glycyl lysine isopeptide (Lys-Gly) (interchain with G-Cter in SUMO2) cross-link involves residue K684. Residue K698 is modified to N6-acetyllysine.

This sequence belongs to the NCBP1 family. Component of the nuclear cap-binding complex (CBC), a heterodimer composed of NCBP1/CBP80 and NCBP2/CBP20 that interacts with m7GpppG-capped RNA. Found in a U snRNA export complex containing PHAX/RNUXA, NCBP1/CBP80, NCBP2/CBP20, RAN, XPO1 and m7G-capped RNA. Identified in a IGF2BP1-dependent mRNP granule complex containing untranslated mRNAs. Interacts with PHAX/RNUXA, SRRT/ARS2, EIF4G2, IGF2BP1, HNRNPF, HNRNPH1, KIAA0427/CTIF, PARN, DROSHA, UPF1 and ALYREF/THOC4. May interact with EIF4G1; the interaction is however controversial since it is reported by, and, but is not observed by. The large PER complex involved in the repression of transcriptional termination is composed of at least PER2, CDK9, DDX5, DHX9, NCBP1/CBP80 and POLR2A. Component of an alternative nuclear cap-binding complex (CBC) composed of NCBP1/CBP80 and NCBP3. Interacts with METTL3. Interacts with ZFC3H1 in a RNase-insensitive manner. Interacts with MTREX. Interacts with TASOR. Interacts with DHX34; the interaction is RNA-dependent. Interacts with KPNA3. Post-translationally, dephosphorylated at Thr-21 by the PNUTS-PP1 complex during RNA polymerase II transcription pause-release.

Its subcellular location is the nucleus. The protein resides in the cytoplasm. Its function is as follows. Component of the cap-binding complex (CBC), which binds cotranscriptionally to the 5'-cap of pre-mRNAs and is involved in various processes such as pre-mRNA splicing, translation regulation, nonsense-mediated mRNA decay, RNA-mediated gene silencing (RNAi) by microRNAs (miRNAs) and mRNA export. The CBC complex is involved in mRNA export from the nucleus via its interaction with ALYREF/THOC4/ALY, leading to the recruitment of the mRNA export machinery to the 5'-end of mRNA and to mRNA export in a 5' to 3' direction through the nuclear pore. The CBC complex is also involved in mediating U snRNA and intronless mRNAs export from the nucleus. The CBC complex is essential for a pioneer round of mRNA translation, before steady state translation when the CBC complex is replaced by cytoplasmic cap-binding protein eIF4E. The pioneer round of mRNA translation mediated by the CBC complex plays a central role in nonsense-mediated mRNA decay (NMD), NMD only taking place in mRNAs bound to the CBC complex, but not on eIF4E-bound mRNAs. The CBC complex enhances NMD in mRNAs containing at least one exon-junction complex (EJC) via its interaction with UPF1, promoting the interaction between UPF1 and UPF2. The CBC complex is also involved in 'failsafe' NMD, which is independent of the EJC complex, while it does not participate in Staufen-mediated mRNA decay (SMD). During cell proliferation, the CBC complex is also involved in microRNAs (miRNAs) biogenesis via its interaction with SRRT/ARS2 and is required for miRNA-mediated RNA interference. The CBC complex also acts as a negative regulator of PARN, thereby acting as an inhibitor of mRNA deadenylation. In the CBC complex, NCBP1/CBP80 does not bind directly capped RNAs (m7GpppG-capped RNA) but is required to stabilize the movement of the N-terminal loop of NCBP2/CBP20 and lock the CBC into a high affinity cap-binding state with the cap structure. Associates with NCBP3 to form an alternative cap-binding complex (CBC) which plays a key role in mRNA export and is particularly important in cellular stress situations such as virus infections. The conventional CBC with NCBP2 binds both small nuclear RNA (snRNA) and messenger (mRNA) and is involved in their export from the nucleus whereas the alternative CBC with NCBP3 does not bind snRNA and associates only with mRNA thereby playing a role only in mRNA export. NCBP1/CBP80 is required for cell growth and viability. In Rattus norvegicus (Rat), this protein is Nuclear cap-binding protein subunit 1 (Ncbp1).